Consider the following 118-residue polypeptide: Integration host factor subunit alpha (118 aa).

The segment at 97 to 118 is disordered; the sequence is NGAMPMSTEESDENTAQSASGG.

Belongs to the bacterial histone-like protein family. In terms of assembly, heterodimer of an alpha and a beta chain.

Functionally, this protein is one of the two subunits of integration host factor, a specific DNA-binding protein that functions in genetic recombination as well as in transcriptional and translational control. In Rhodopseudomonas palustris (strain ATCC BAA-98 / CGA009), this protein is Integration host factor subunit alpha.